Here is a 154-residue protein sequence, read N- to C-terminus: 3-dehydroquinate dehydratase (154 aa).

The active-site Proton acceptor is the Y26. Substrate is bound by residues N77, H83, and D90. Catalysis depends on H103, which acts as the Proton donor. Substrate is bound by residues 104-105 (IS) and R114.

This sequence belongs to the type-II 3-dehydroquinase family. Homododecamer.

It carries out the reaction 3-dehydroquinate = 3-dehydroshikimate + H2O. It functions in the pathway metabolic intermediate biosynthesis; chorismate biosynthesis; chorismate from D-erythrose 4-phosphate and phosphoenolpyruvate: step 3/7. Catalyzes a trans-dehydration via an enolate intermediate. This chain is 3-dehydroquinate dehydratase, found in Buchnera aphidicola subsp. Baizongia pistaciae (strain Bp).